Consider the following 297-residue polypeptide: Probable endonuclease 4 (297 aa).

9 residues coordinate Zn(2+): His-69, His-110, Glu-145, Asp-179, His-182, His-214, Asp-227, His-229, and Glu-259.

The protein belongs to the AP endonuclease 2 family. Zn(2+) serves as cofactor.

The catalysed reaction is Endonucleolytic cleavage to 5'-phosphooligonucleotide end-products.. Functionally, endonuclease IV plays a role in DNA repair. It cleaves phosphodiester bonds at apurinic or apyrimidinic (AP) sites, generating a 3'-hydroxyl group and a 5'-terminal sugar phosphate. This Listeria innocua serovar 6a (strain ATCC BAA-680 / CLIP 11262) protein is Probable endonuclease 4.